The chain runs to 216 residues: MRVAIIDYGSGNLRSATKAFERAAREAGIAAEIDLTDRPERVATADRIVLPGVGAYADCRRGLAVVEGMEEALTEAVEKTGRPFFGICVGMQLMSSRGLEKTVTKGFGWIAGDVVGMTPEDPSLKIPQIGWNTLDLKRPHPLFDGIPTGENGLHAYFVHSYHLAAERAEDVVAEAGYGGPVTAFVARDNKAGSQFHPEKSQALGLALISNFLRWKP.

Residues 2-216 (RVAIIDYGSG…LISNFLRWKP (215 aa)) enclose the Glutamine amidotransferase type-1 domain. The active-site Nucleophile is the C88. Residues H196 and E198 contribute to the active site.

As to quaternary structure, heterodimer of HisH and HisF.

The protein resides in the cytoplasm. It catalyses the reaction 5-[(5-phospho-1-deoxy-D-ribulos-1-ylimino)methylamino]-1-(5-phospho-beta-D-ribosyl)imidazole-4-carboxamide + L-glutamine = D-erythro-1-(imidazol-4-yl)glycerol 3-phosphate + 5-amino-1-(5-phospho-beta-D-ribosyl)imidazole-4-carboxamide + L-glutamate + H(+). The catalysed reaction is L-glutamine + H2O = L-glutamate + NH4(+). It functions in the pathway amino-acid biosynthesis; L-histidine biosynthesis; L-histidine from 5-phospho-alpha-D-ribose 1-diphosphate: step 5/9. IGPS catalyzes the conversion of PRFAR and glutamine to IGP, AICAR and glutamate. The HisH subunit catalyzes the hydrolysis of glutamine to glutamate and ammonia as part of the synthesis of IGP and AICAR. The resulting ammonia molecule is channeled to the active site of HisF. The chain is Imidazole glycerol phosphate synthase subunit HisH from Rhizobium meliloti (strain 1021) (Ensifer meliloti).